Here is a 414-residue protein sequence, read N- to C-terminus: Serine-type anaerobic sulfatase-maturating enzyme (414 aa).

The Radical SAM core domain maps to 5 to 250; that stretch reads TYAPFAKPLY…LCTIFDEWVK (246 aa). [4Fe-4S] cluster-binding residues include C24 and C28. Y30 is an S-adenosyl-L-methionine binding site. C31 contributes to the [4Fe-4S] cluster binding site. Residues G76, S131, and R143 each contribute to the S-adenosyl-L-methionine site. Residues C276, C282, and C297 each contribute to the [4Fe-4S] cluster site. D298 functions as the Proton acceptor in the catalytic mechanism. Positions 339, 342, 348, 352, and 371 each coordinate [4Fe-4S] cluster.

Belongs to the radical SAM superfamily. Anaerobic sulfatase-maturating enzyme family. It depends on [4Fe-4S] cluster as a cofactor.

It carries out the reaction L-seryl-[sulfatase] + S-adenosyl-L-methionine = 3-oxo-L-alanyl-[sulfatase] + 5'-deoxyadenosine + L-methionine + H(+). It participates in protein modification; sulfatase oxidation. Involved in 'Ser-type' sulfatase maturation under anaerobic conditions. Links the heparin and the chondroitin sulfate utilization pathways which contribute to the colonization of the intestinal tract. May catalyze the activation of chondro-6-sulfatase, i.e. the post-translational modification of a specific serine residue into 3-oxoalanine (also known as C(alpha)-formylglycine (FGly)), by a free radical chemical mechanism initiated via the reductive cleavage of S-adenosyl-L-methionine (SAM). Is also able to oxidize a cysteine residue in a synthetic substrate to FGly in vitro, but not in a recombinant Cys-type sulfatase in vivo. But since B.thetaiotaomicron possesses only Ser-type sulfatases, the oxidation of serine residues to FGly is the sole physiological activity. The chain is Serine-type anaerobic sulfatase-maturating enzyme (chuR) from Bacteroides thetaiotaomicron (strain ATCC 29148 / DSM 2079 / JCM 5827 / CCUG 10774 / NCTC 10582 / VPI-5482 / E50).